Reading from the N-terminus, the 100-residue chain is Enhancer of yellow 2 transcription factor (100 aa).

It belongs to the ENY2 family. As to quaternary structure, component of the nuclear pore complex (NPC)-associated AMEX complex (anchoring and mRNA export complex), composed of at least e(y)2 and xmas-2. Component of the SAGA transcription coactivator-HAT complexes, at least composed of Ada2b, e(y)2, Pcaf/Gcn5, Taf10 and Nipped-A/Trrap. Within the SAGA complex, e(y)2, Sgf11, and not/nonstop form an additional subcomplex of SAGA called the DUB module (deubiquitination module). Component of the THO complex, composed of at least e(y)2, HPR1, THO2, THOC5, THOC6 and THOC7. Interacts with e(y)1. Interacts with su(Hw) (via zinc fingers). Interacts with xmas-2; required for localization to the nuclear periphery. Interacts with the nuclear pore complex (NPC).

Its subcellular location is the nucleus. It is found in the nucleoplasm. It localises to the cytoplasm. Involved in mRNA export coupled transcription activation by association with both the AMEX and the SAGA complexes. The SAGA complex is a multiprotein complex that activates transcription by remodeling chromatin and mediating histone acetylation and deubiquitination. Within the SAGA complex, participates in a subcomplex that specifically deubiquitinates histone H2B. The SAGA complex is recruited to specific gene promoters by activators, where it is required for transcription. Required for nuclear receptor-mediated transactivation. Involved in transcription elongation by recruiting the THO complex onto nascent mRNA. The AMEX complex functions in docking export-competent ribonucleoprotein particles (mRNPs) to the nuclear entrance of the nuclear pore complex (nuclear basket). AMEX participates in mRNA export and accurate chromatin positioning in the nucleus by tethering genes to the nuclear periphery. The chain is Enhancer of yellow 2 transcription factor from Drosophila pseudoobscura pseudoobscura (Fruit fly).